The sequence spans 238 residues: Ribose-5-phosphate isomerase A (238 aa).

Substrate is bound by residues 30-33, 87-90, and 100-103; these read SGST, DGAD, and KGGG. Residue Glu-109 is the Proton acceptor of the active site. Lys-127 is a binding site for substrate.

It belongs to the ribose 5-phosphate isomerase family. Homodimer.

The enzyme catalyses aldehydo-D-ribose 5-phosphate = D-ribulose 5-phosphate. Its pathway is carbohydrate degradation; pentose phosphate pathway; D-ribose 5-phosphate from D-ribulose 5-phosphate (non-oxidative stage): step 1/1. Catalyzes the reversible conversion of ribose-5-phosphate to ribulose 5-phosphate. The protein is Ribose-5-phosphate isomerase A of Prochlorococcus marinus (strain MIT 9303).